Reading from the N-terminus, the 138-residue chain is Large ribosomal subunit protein uL16c (138 aa).

It belongs to the universal ribosomal protein uL16 family. As to quaternary structure, part of the 50S ribosomal subunit.

It localises to the plastid. It is found in the chloroplast. This Phaeodactylum tricornutum (strain CCAP 1055/1) protein is Large ribosomal subunit protein uL16c.